We begin with the raw amino-acid sequence, 320 residues long: R2-like ligand binding oxidase (320 aa).

Residues Glu-68, Glu-101, and His-104 each contribute to the Mn(2+) site. Residues 71–162 (VTKDIQPFMS…AAQVRASVVY (92 aa)) constitute a cross-link (3-(O4'-tyrosyl)-valine (Val-Tyr)). Position 101 (Glu-101) interacts with Fe cation. 3 residues coordinate Fe cation: Glu-167, Glu-202, and His-205.

The protein belongs to the ribonucleoside diphosphate reductase small chain family. R2-like ligand binding oxidase subfamily. In terms of assembly, homodimer. Fe cation is required as a cofactor. It depends on Mn(2+) as a cofactor.

Its function is as follows. Probable oxidase that might be involved in lipid metabolism. The chain is R2-like ligand binding oxidase (nrdB) from Mycolicibacterium smegmatis (strain ATCC 700084 / mc(2)155) (Mycobacterium smegmatis).